The following is a 257-amino-acid chain: Imidazole glycerol phosphate synthase subunit HisF (257 aa).

Active-site residues include D11 and D130.

Belongs to the HisA/HisF family. As to quaternary structure, heterodimer of HisH and HisF.

Its subcellular location is the cytoplasm. It catalyses the reaction 5-[(5-phospho-1-deoxy-D-ribulos-1-ylimino)methylamino]-1-(5-phospho-beta-D-ribosyl)imidazole-4-carboxamide + L-glutamine = D-erythro-1-(imidazol-4-yl)glycerol 3-phosphate + 5-amino-1-(5-phospho-beta-D-ribosyl)imidazole-4-carboxamide + L-glutamate + H(+). Its pathway is amino-acid biosynthesis; L-histidine biosynthesis; L-histidine from 5-phospho-alpha-D-ribose 1-diphosphate: step 5/9. In terms of biological role, IGPS catalyzes the conversion of PRFAR and glutamine to IGP, AICAR and glutamate. The HisF subunit catalyzes the cyclization activity that produces IGP and AICAR from PRFAR using the ammonia provided by the HisH subunit. This chain is Imidazole glycerol phosphate synthase subunit HisF, found in Shewanella sediminis (strain HAW-EB3).